A 444-amino-acid chain; its full sequence is Phosphoglucosamine mutase (444 aa).

Ser102 functions as the Phosphoserine intermediate in the catalytic mechanism. Residues Ser102, Asp241, Asp243, and Asp245 each contribute to the Mg(2+) site. Phosphoserine is present on Ser102.

This sequence belongs to the phosphohexose mutase family. The cofactor is Mg(2+). Activated by phosphorylation.

The catalysed reaction is alpha-D-glucosamine 1-phosphate = D-glucosamine 6-phosphate. Its function is as follows. Catalyzes the conversion of glucosamine-6-phosphate to glucosamine-1-phosphate. The chain is Phosphoglucosamine mutase from Erwinia tasmaniensis (strain DSM 17950 / CFBP 7177 / CIP 109463 / NCPPB 4357 / Et1/99).